Reading from the N-terminus, the 315-residue chain is PIH1 domain-containing protein 2 (315 aa).

This sequence belongs to the PIH1 family.

The sequence is that of PIH1 domain-containing protein 2 (Pih1d2) from Mus musculus (Mouse).